Consider the following 630-residue polypeptide: Protein phosphatase 2C-like domain-containing protein 1 (630 aa).

The PPM-type phosphatase domain maps to 170-621 (GVGICEDRNS…DNITVMVIFL (452 aa)). Residues 557 to 569 (TTHRKPCSEKVTD) are compositionally biased toward basic and acidic residues. A disordered region spans residues 557 to 578 (TTHRKPCSEKVTDRPTSVNDVA).

The protein belongs to the PP2C family.

This is Protein phosphatase 2C-like domain-containing protein 1 (PP2D1) from Homo sapiens (Human).